The chain runs to 440 residues: MLRLQMMEGLIVKRTLLLILLLVISVSYALPIEPIIYVNKSTVDYQNAKILMDNFYSSREININGDNVTIVINDIMYIPSIDELEIKNGDKNLIIKFDRDGNKVKYKDIECIEYLNLKKGEEISLFNKSYIVEDITSNYVILKEKDGKEVLTNESFEYDGYKVVVKLVSSDLNTIIVDIYKNEKVLDSPKLTKGKIYYMKGGTLGLMYENCTRIGKGYRFTFRVYSTIKIEEGEDYPLDKEFKVKEISTDKIKLEYKNIDSLGNEIYLFNYTIIPEKCYKDYVLFKVIKRKEKTVDVKDVAYIGDGIYAVKVNNTVHVFYKGKELKNHEKIYLGSVDVYSSNPLNVNKDIILIGGPKVNKIVKELEDKGLLKVNISTNYPGNNRGIILKIKNPYNDNNIYILAGSDRWGTKAAILVFLTKYNDEDTLMVEWDKGEIKIIK.

The signal sequence occupies residues 1 to 29 (MLRLQMMEGLIVKRTLLLILLLVISVSYA).

This sequence belongs to the Mj S-layer protein family.

This is an uncharacterized protein from Methanocaldococcus jannaschii (strain ATCC 43067 / DSM 2661 / JAL-1 / JCM 10045 / NBRC 100440) (Methanococcus jannaschii).